The chain runs to 45 residues: Large ribosomal subunit protein bL34 (45 aa).

Belongs to the bacterial ribosomal protein bL34 family.

The sequence is that of Large ribosomal subunit protein bL34 (rpmH) from Streptomyces bikiniensis.